The sequence spans 146 residues: uncharacterized protein (146 aa).

5 consecutive transmembrane segments (helical) span residues 5–27 (GAMV…YGLA), 32–49 (FVYV…YIIL), 61–80 (LAVM…FFSG), 90–108 (SLGL…ARVF), and 120–142 (FFLK…MLFL).

It is found in the cell membrane. This is an uncharacterized protein from Archaeoglobus fulgidus (strain ATCC 49558 / DSM 4304 / JCM 9628 / NBRC 100126 / VC-16).